A 411-amino-acid chain; its full sequence is Inhibin beta B chain (411 aa).

The N-terminal stretch at 1–28 (MDGLPGRALGAACLLLLVAGWLGPEAWG) is a signal peptide. The tract at residues 28 to 69 (GSPTPPPSPAAPPPPPPPGAPGGSQDTCTSCGGGGGGFRRPE) is disordered. The propeptide occupies 29-296 (SPTPPPSPAA…GDSRHRIRKR (268 aa)). Residues 30–47 (PTPPPSPAAPPPPPPPGA) show a composition bias toward pro residues. Asparagine 97 carries N-linked (GlcNAc...) asparagine glycosylation. 4 disulfides stabilise this stretch: cysteine 300-cysteine 308, cysteine 307-cysteine 376, cysteine 336-cysteine 408, and cysteine 340-cysteine 410.

This sequence belongs to the TGF-beta family. In terms of assembly, dimeric, linked by one or more disulfide bonds. Inhibin B is a dimer of alpha and beta-B. Activin B is a homodimer of beta-B. Activin AB is a dimer of beta-A and beta-B. Interacts with FST and FSTL3. Activin B interacts with BMPR2. Uterus, testis, ovary, lung, kidney, brain, CJ7 embryonic stem cells, and possibly in liver.

It is found in the secreted. Inhibins and activins inhibit and activate, respectively, the secretion of follitropin by the pituitary gland. Inhibins/activins are involved in regulating a number of diverse functions such as hypothalamic and pituitary hormone secretion, gonadal hormone secretion, germ cell development and maturation, erythroid differentiation, insulin secretion, nerve cell survival, embryonic axial development or bone growth, depending on their subunit composition. Inhibins appear to oppose the functions of activins. Its function is as follows. Activin B is a dimer of alpha and beta-B that plays a role in several essential biological processes including embryonic development, stem cell maintenance and differentiation, haematopoiesis, cell proliferation and wound healing. Signals through type I receptor ACVR1C, abundantly expressed in pancreatic beta cells, and type II receptors like ACVR2A. Upon ligand binding, these receptors phosphorylate intracellular signaling mediators SMAD2 and SMAD3, which form a complex with SMAD4, translocate to the nucleus, and regulate gene expression. Plays a crucial role in the induction of hepcidin by inflammation through activation of ACVR1C and subsequent phosphorylation of SMAD1/5/8. Regulates adipocyte lipid metabolism by decreasing non-esterified fatty acids and glycerol release and increases intracellular triglyceride content. Stimulates wound healing by promoting cell migration and hair follicle regeneration through the JNK and ERK signaling pathways downstream of RHOA. In terms of biological role, inhibin B is a dimer of alpha and beta-B that plays a crucial role in the regulation of the reproductive system by inhibiting the secretion of follicle-stimulating hormone (FSH) from the anterior pituitary gland. Thereby, maintains reproductive homeostasis in both males and females. Acts as a more potent suppressor of FSH release than inhibin A. Functions as competitive receptor antagonist binding activin type II receptors with high affinity in the presence of the TGF-beta type III coreceptor/TGFBR3L. The sequence is that of Inhibin beta B chain (Inhbb) from Mus musculus (Mouse).